The primary structure comprises 269 residues: Hydroxyethylthiazole kinase (269 aa).

Residue Met-45 participates in substrate binding. Residues Arg-121 and Thr-167 each coordinate ATP. Gly-194 lines the substrate pocket.

This sequence belongs to the Thz kinase family. Mg(2+) is required as a cofactor.

It carries out the reaction 5-(2-hydroxyethyl)-4-methylthiazole + ATP = 4-methyl-5-(2-phosphooxyethyl)-thiazole + ADP + H(+). It participates in cofactor biosynthesis; thiamine diphosphate biosynthesis; 4-methyl-5-(2-phosphoethyl)-thiazole from 5-(2-hydroxyethyl)-4-methylthiazole: step 1/1. Functionally, catalyzes the phosphorylation of the hydroxyl group of 4-methyl-5-beta-hydroxyethylthiazole (THZ). The polypeptide is Hydroxyethylthiazole kinase (Geobacillus sp. (strain WCH70)).